The chain runs to 2261 residues: Phospholipid-transporting ATPase ABCA1 (2261 aa).

Residue Cys-3 is the site of S-palmitoyl cysteine attachment. Asn-14 carries an N-linked (GlcNAc...) asparagine glycan. A helical membrane pass occupies residues 22 to 42 (TCQLLLEVAWPLFIFLILISV). The S-palmitoyl cysteine moiety is linked to residue Cys-23. The Extracellular portion of the chain corresponds to 43 to 639 (RLSYPPYEQH…DIFLRVMSRS (597 aa)). The annulus domain 1 stretch occupies residues 69–80 (WVQGIICNANNP). The cysteines at positions 75 and 309 are disulfide-linked. N-linked (GlcNAc...) asparagine glycosylation is found at Asn-98, Asn-151, Asn-161, Asn-196, Asn-244, Asn-292, Asn-337, and Asn-349. The segment at 368 to 379 (SRIIWKALKPLL) is annulus domain 2. 4 N-linked (GlcNAc...) asparagine glycosylation sites follow: Asn-400, Asn-478, Asn-489, and Asn-521. Residues 564-594 (ERTNKIKDGYWDPGPRADPFEDMRYVWGGFA) are gateway domain. A run of 5 helical transmembrane segments spans residues 640 to 660 (MPLF…KGIV), 683 to 703 (FSWF…LVVI), 716 to 736 (SVVF…CFLI), 745 to 765 (LAAA…VLCV), and 777 to 797 (IFAS…FALF). N-linked (GlcNAc...) asparagine glycosylation occurs at Asn-820. A helical transmembrane segment spans residues 827–847 (MMLFDTFLYGVMTWYIEAVFP). An ABC transporter 1 domain is found at 899–1131 (VSIQNLVKVY…LGTGYYLTLV (233 aa)). 933-940 (GHNGAGKT) contributes to the ATP binding site. Residues 1041–1057 (LSVALAFVGGSKVVILD) form a helical membrane-spanning segment. Position 1042 is a phosphoserine; by PKA (Ser-1042). Residues Cys-1110 and Cys-1111 are each lipidated (S-palmitoyl cysteine). Residues Asn-1144 and Asn-1294 are each glycosylated (N-linked (GlcNAc...) asparagine). Positions 1283–1312 (RPFTEDDAADPNDSDIDPESRETDLLSGMD) are disordered. Acidic residues predominate over residues 1287–1299 (EDDAADPNDSDID). Ser-1296 carries the post-translational modification Phosphoserine. A helical transmembrane segment spans residues 1351-1371 (IVLPAVFVCIALVFSLIVPPF). Residues 1372-1656 (GKYPSLELQP…ALMTTSVDVL (285 aa)) are Extracellular-facing. A glycan (N-linked (GlcNAc...) asparagine) is linked at Asn-1453. A disulfide bridge connects residues Cys-1463 and Cys-1477. 2 N-linked (GlcNAc...) asparagine glycosylation sites follow: Asn-1504 and Asn-1637. The next 6 membrane-spanning stretches (helical) occupy residues 1657–1677 (VSIC…VFLI), 1703–1723 (FVWD…IFIC), 1735–1755 (LPVL…LMYP), 1768–1788 (VVLT…TFVL), 1802–1822 (ILKS…LIDM), and 1852–1872 (NLFA…LIQY). One can recognise an ABC transporter 2 domain in the interval 1912–2144 (LEIKELTKIY…FGDGYTIVVR (233 aa)). Residue 1946–1953 (GVNGAGKS) participates in ATP binding. An N-linked (GlcNAc...) asparagine glycan is attached at Asn-2044. Ser-2054 carries the post-translational modification Phosphoserine; by PKA. Asn-2238 is a glycosylation site (N-linked (GlcNAc...) asparagine).

This sequence belongs to the ABC transporter superfamily. ABCA family. As to quaternary structure, interacts with MEGF10. May interact with APOE1; functionally associated with APOE1 in the biogenesis of HDLs. Interacts with ABCA8; this interaction potentiates cholesterol efflux. Interacts with ABCA12 and NR1H2; this interaction is required for ABCA1 localization to the cell surface and is necessary for its normal activity and stability. Post-translationally, phosphorylation on Ser-2054 regulates phospholipid efflux. In terms of processing, palmitoylated by ZDHHC8. Palmitoylation is essential for localization to the plasma membrane. In terms of tissue distribution, widely expressed, but most abundant in macrophages.

It localises to the cell membrane. Its subcellular location is the endosome. It carries out the reaction ATP + H2O + phospholipidSide 1 = ADP + phosphate + phospholipidSide 2.. It catalyses the reaction a 1,2-diacyl-sn-glycero-3-phosphocholine(out) + ATP + H2O = a 1,2-diacyl-sn-glycero-3-phosphocholine(in) + ADP + phosphate + H(+). The catalysed reaction is a 1,2-diacyl-sn-glycero-3-phospho-L-serine(out) + ATP + H2O = a 1,2-diacyl-sn-glycero-3-phospho-L-serine(in) + ADP + phosphate + H(+). The enzyme catalyses a sphingomyelin(in) + ATP + H2O = a sphingomyelin(out) + ADP + phosphate + H(+). It carries out the reaction cholesterol(in) + ATP + H2O = cholesterol(out) + ADP + phosphate + H(+). Its activity is regulated as follows. ATPase activity is decreased by cholesterol and ceramide. ATPase activity is stimulated by phosphatidylcholine and to a lesser degree by phosphatidylserine and sphingomyelin. Phospholipid translocase activity is highly reduced by berylium fluoride and aluminum flouride and reduced by N-ethylmaleimide. Catalyzes the translocation of specific phospholipids from the cytoplasmic to the extracellular/lumenal leaflet of membrane coupled to the hydrolysis of ATP. Thereby, participates in phospholipid transfer to apolipoproteins to form nascent high density lipoproteins/HDLs. Transports preferentially phosphatidylcholine over phosphatidylserine. May play a similar role in the efflux of intracellular cholesterol to apolipoproteins and the formation of nascent high density lipoproteins/HDLs. Translocates phospholipids from the outer face of the plasma membrane and forces it through its gateway and annulus into an elongated hydrophobic tunnel in its extracellular domain. This is Phospholipid-transporting ATPase ABCA1 from Homo sapiens (Human).